A 380-amino-acid chain; its full sequence is Epoxyqueuosine reductase (380 aa).

Catalysis depends on aspartate 134, which acts as the Proton donor. Residues phenylalanine 178–glutamine 208 enclose the 4Fe-4S ferredoxin-type 1 domain. Residues cysteine 188, cysteine 191, cysteine 194, cysteine 198, cysteine 214, cysteine 240, cysteine 243, and cysteine 247 each contribute to the [4Fe-4S] cluster site. The 33-residue stretch at proline 226–histidine 258 folds into the 4Fe-4S ferredoxin-type 2 domain.

Belongs to the QueG family. Monomer. It depends on cob(II)alamin as a cofactor. Requires [4Fe-4S] cluster as cofactor.

The protein localises to the cytoplasm. The enzyme catalyses epoxyqueuosine(34) in tRNA + AH2 = queuosine(34) in tRNA + A + H2O. It participates in tRNA modification; tRNA-queuosine biosynthesis. Functionally, catalyzes the conversion of epoxyqueuosine (oQ) to queuosine (Q), which is a hypermodified base found in the wobble positions of tRNA(Asp), tRNA(Asn), tRNA(His) and tRNA(Tyr). The protein is Epoxyqueuosine reductase of Bacillus cereus (strain ATCC 14579 / DSM 31 / CCUG 7414 / JCM 2152 / NBRC 15305 / NCIMB 9373 / NCTC 2599 / NRRL B-3711).